Consider the following 264-residue polypeptide: Cell division protein DivIB (264 aa).

Topologically, residues 1–23 are cytoplasmic; sequence MAVYEERIPQVKQQRPRRRGNRK. Residues 24–44 traverse the membrane as a helical segment; that stretch reads LVFLLVLFFLTILIIVFIRSP. Residues 45 to 264 lie on the Extracellular side of the membrane; that stretch reads YSKVQEIRVT…GQEQPQQPQQ (220 aa). Residues 46 to 114 form the POTRA domain; the sequence is SKVQEIRVTG…GLITLHITEQ (69 aa).

The protein belongs to the FtsQ/DivIB family. DivIB subfamily.

Its subcellular location is the cell membrane. Cell division protein that may be involved in stabilizing or promoting the assembly of the division complex. In Brevibacillus brevis (strain 47 / JCM 6285 / NBRC 100599), this protein is Cell division protein DivIB.